The chain runs to 87 residues: Apolipoprotein C-I (87 aa).

The signal sequence occupies residues 1-26; that stretch reads MRLFLSLPVLVVVLAMVLEGPAPAQA.

It belongs to the apolipoprotein C1 family.

It localises to the secreted. In terms of biological role, inhibitor of lipoprotein binding to the low density lipoprotein (LDL) receptor, LDL receptor-related protein, and very low density lipoprotein (VLDL) receptor. Associates with high density lipoproteins (HDL) and the triacylglycerol-rich lipoproteins in the plasma and makes up about 10% of the protein of the VLDL and 2% of that of HDL. Appears to interfere directly with fatty acid uptake and is also the major plasma inhibitor of cholesteryl ester transfer protein (CETP). Binds free fatty acids and reduces their intracellular esterification. Modulates the interaction of APOE with beta-migrating VLDL and inhibits binding of beta-VLDL to the LDL receptor-related protein. In Zalophus californianus (California sealion), this protein is Apolipoprotein C-I (APOC1).